A 322-amino-acid polypeptide reads, in one-letter code: NADH-quinone oxidoreductase subunit H (322 aa).

9 helical membrane passes run 15-35 (FFKV…LSIV), 50-69 (NRVG…KILF), 81-101 (FIFV…IPII), 114-134 (IGIL…LFAG), 149-169 (ACVQ…GVVA), 186-206 (IWNV…GLAV), 237-257 (FFIG…TLFF), 265-285 (IPGC…FILI), and 302-322 (WKFC…LILV).

It belongs to the complex I subunit 1 family. NDH-1 is composed of 13 different subunits. Subunits NuoA, H, J, K, L, M, N constitute the membrane sector of the complex.

Its subcellular location is the cell membrane. It catalyses the reaction a quinone + NADH + 5 H(+)(in) = a quinol + NAD(+) + 4 H(+)(out). In terms of biological role, NDH-1 shuttles electrons from NADH, via FMN and iron-sulfur (Fe-S) centers, to quinones in the respiratory chain. The immediate electron acceptor for the enzyme in this species is believed to be ubiquinone. Couples the redox reaction to proton translocation (for every two electrons transferred, four hydrogen ions are translocated across the cytoplasmic membrane), and thus conserves the redox energy in a proton gradient. This subunit may bind ubiquinone. The chain is NADH-quinone oxidoreductase subunit H from Buchnera aphidicola subsp. Acyrthosiphon pisum (strain 5A).